A 375-amino-acid chain; its full sequence is Histidine biosynthesis bifunctional protein HisB (375 aa).

The histidinol-phosphatase stretch occupies residues 1–168 (MTPIVFIDRD…GIAHTLADAP (168 aa)). Asp-8 (nucleophile) is an active-site residue. Mg(2+) contacts are provided by Asp-8, Asp-10, and Asp-128. Catalysis depends on Asp-10, which acts as the Proton donor. Residues 169–375 (RRAVVQRHTK…HVLPSTKGAL (207 aa)) form an imidazoleglycerol-phosphate dehydratase region.

This sequence in the N-terminal section; belongs to the histidinol-phosphatase family. It in the C-terminal section; belongs to the imidazoleglycerol-phosphate dehydratase family. Mg(2+) is required as a cofactor.

The protein localises to the cytoplasm. The enzyme catalyses D-erythro-1-(imidazol-4-yl)glycerol 3-phosphate = 3-(imidazol-4-yl)-2-oxopropyl phosphate + H2O. It catalyses the reaction L-histidinol phosphate + H2O = L-histidinol + phosphate. Its pathway is amino-acid biosynthesis; L-histidine biosynthesis; L-histidine from 5-phospho-alpha-D-ribose 1-diphosphate: step 6/9. It functions in the pathway amino-acid biosynthesis; L-histidine biosynthesis; L-histidine from 5-phospho-alpha-D-ribose 1-diphosphate: step 8/9. The sequence is that of Histidine biosynthesis bifunctional protein HisB from Xylella fastidiosa (strain 9a5c).